Here is a 426-residue protein sequence, read N- to C-terminus: Adenylosuccinate synthetase (426 aa).

GTP-binding positions include 14-20 (GDEGKGK) and 42-44 (GHT). The Proton acceptor role is filled by Asp15. Residues Asp15 and Gly42 each coordinate Mg(2+). Residues 15–18 (DEGK), 40–43 (NAGH), Thr130, Arg144, Gln224, Thr239, and Arg303 each bind IMP. The Proton donor role is filled by His43. 299-305 (TVTKRPR) contacts substrate. GTP is bound by residues Arg305, 331 to 333 (LID), and 413 to 415 (SVG).

Belongs to the adenylosuccinate synthetase family. Homodimer. It depends on Mg(2+) as a cofactor.

It is found in the cytoplasm. The catalysed reaction is IMP + L-aspartate + GTP = N(6)-(1,2-dicarboxyethyl)-AMP + GDP + phosphate + 2 H(+). Its pathway is purine metabolism; AMP biosynthesis via de novo pathway; AMP from IMP: step 1/2. Plays an important role in the de novo pathway of purine nucleotide biosynthesis. Catalyzes the first committed step in the biosynthesis of AMP from IMP. This chain is Adenylosuccinate synthetase, found in Malacoplasma penetrans (strain HF-2) (Mycoplasma penetrans).